A 388-amino-acid polypeptide reads, in one-letter code: Sporulation-specific mitogen-activated protein kinase SMK1 (388 aa).

One can recognise a Protein kinase domain in the interval 38 to 337 (YEIIQFLGKG…VEQAISHPFL (300 aa)). Residues 44–52 (LGKGAYGTV) and Lys-69 contribute to the ATP site. Asp-166 (proton acceptor) is an active-site residue. A TXY motif is present at residues 207–209 (TNY).

Belongs to the protein kinase superfamily. CMGC Ser/Thr protein kinase family. MAP kinase subfamily. In terms of assembly, interacts with GSC2. The cofactor is Mg(2+). Post-translationally, dually phosphorylated on Thr-207 and Tyr-209, which activates the enzyme.

It carries out the reaction L-seryl-[protein] + ATP = O-phospho-L-seryl-[protein] + ADP + H(+). The catalysed reaction is L-threonyl-[protein] + ATP = O-phospho-L-threonyl-[protein] + ADP + H(+). With respect to regulation, activated by tyrosine and threonine phosphorylation. In terms of biological role, required for spore wall assembly. Required for proper deposition of the two outer layers of the spore wall, the chitosan and dityrosine layers. Negatively regulates GSC2, an alternate catalytic subunit of the 1,3-beta-glucan synthase (GS). Participates in a developmentally regulated signal transduction pathway that coordinates cytodifferentiation events with the transcriptional program. This chain is Sporulation-specific mitogen-activated protein kinase SMK1 (SMK1), found in Saccharomyces cerevisiae (strain ATCC 204508 / S288c) (Baker's yeast).